The primary structure comprises 470 residues: Pheromone a factor receptor (470 aa).

At 1–5 (MSYKS) the chain is on the extracellular side. Residues 6-23 (AIIGLCLLAVILLAPPLA) traverse the membrane as a helical segment. Residues 24 to 29 (WHSHTK) lie on the Cytoplasmic side of the membrane. Residues 30–53 (NIPAIILITWLLTMNLTCIVDAAI) form a helical membrane-spanning segment. At 54-70 (WSDDDFLTRWDGKGWCD) the chain is on the extracellular side. A helical membrane pass occupies residues 71–98 (IVIKLQVGANIGISCAVTNIIYNLHTIL). Over 99 to 116 (KADSVLPDLSSWTKIVKD) the chain is Cytoplasmic. A helical transmembrane segment spans residues 117-134 (LVISLFTPVMVMGFSYLL). The Extracellular portion of the chain corresponds to 135 to 155 (QVFRYGIARYNGCQNLLSPTW). Residues 156-183 (ITTVLYTMWMLIWSFVGAVYATLVLFVF) traverse the membrane as a helical segment. Topologically, residues 184-205 (YKKRKDVRDILHCTNSGLNLTR) are cytoplasmic. The helical transmembrane segment at 206-228 (FARLLIFCFIIILVMFPFSVYTF) threads the bilayer. The Extracellular segment spans residues 229–266 (VQDLQQVEGHYTFKNTHSSTIWNTIIKFDPGRPIYNIW). A helical membrane pass occupies residues 267–285 (LYVLMSYLVFLIFGLGSDA). The Cytoplasmic segment spans residues 286–470 (LHMYSKFLRS…EHSSENTAGP (185 aa)). The segment at 300 to 470 (FVLDMWKRFI…EHSSENTAGP (171 aa)) is hydrophilic. The tract at residues 440 to 470 (NFEGESLCYSPASKEENSSSNEHSSENTAGP) is disordered.

It belongs to the G-protein coupled receptor 4 family.

It localises to the membrane. Its function is as follows. Receptor for the peptide pheromone a factor. This is Pheromone a factor receptor (STE3) from Saccharomyces cerevisiae (strain ATCC 204508 / S288c) (Baker's yeast).